The chain runs to 400 residues: Enoyl-[acyl-carrier-protein] reductase [NADH] (400 aa).

Residues 48-53 (GASTGY), 74-75 (FE), 111-112 (DA), and 139-140 (LA) each bind NAD(+). Tyrosine 225 is a binding site for substrate. Tyrosine 235 functions as the Proton donor in the catalytic mechanism. Residues lysine 244 and 273-275 (VVT) each bind NAD(+).

Belongs to the TER reductase family. As to quaternary structure, monomer.

The catalysed reaction is a 2,3-saturated acyl-[ACP] + NAD(+) = a (2E)-enoyl-[ACP] + NADH + H(+). It participates in lipid metabolism; fatty acid biosynthesis. Functionally, involved in the final reduction of the elongation cycle of fatty acid synthesis (FAS II). Catalyzes the reduction of a carbon-carbon double bond in an enoyl moiety that is covalently linked to an acyl carrier protein (ACP). This is Enoyl-[acyl-carrier-protein] reductase [NADH] from Burkholderia ambifaria (strain ATCC BAA-244 / DSM 16087 / CCUG 44356 / LMG 19182 / AMMD) (Burkholderia cepacia (strain AMMD)).